We begin with the raw amino-acid sequence, 738 residues long: Alcohol dehydrogenase (quinone), dehydrogenase subunit (738 aa).

The signal sequence occupies residues M1 to A35. E97 serves as a coordination point for pyrroloquinoline quinone. The cysteines at positions 143 and 144 are disulfide-linked. Residue R149 participates in pyrroloquinoline quinone binding. E217 is a Ca(2+) binding site. Residue T278 coordinates pyrroloquinoline quinone. The Ca(2+) site is built by N298 and D343. D343 acts as the Proton acceptor in catalysis. Residues K370 and I584 each contribute to the pyrroloquinoline quinone site. In terms of domain architecture, Cytochrome c spans F634–P738. Heme c-binding residues include C650, C653, H654, and M693.

This sequence belongs to the bacterial PQQ dehydrogenase family. In terms of assembly, the alcohol dehydrogenase multicomponent enzyme system is composed of a dehydrogenase subunit I (AdhA) and a cytochrome c subunit II (AdhB). Pyrroloquinoline quinone is required as a cofactor. It depends on Ca(2+) as a cofactor. Heme c serves as cofactor.

The protein resides in the cell membrane. The enzyme catalyses ethanol + a ubiquinone = a ubiquinol + acetaldehyde. In terms of biological role, dehydrogenase component of the alcohol dehydrogenase multicomponent enzyme system which is involved in the production of acetic acid and in the ethanol oxidase respiratory chain. Quinohemoprotein alcohol dehydrogenase (ADH) catalyzes the oxidation of ethanol to acetaldehyde by transferring electrons to the ubiquinone embedded in the membrane phospholipids. The electrons transfer from ethanol to membranous ubiquinone occurs from pyrroloquinoline quinone (PQQ) to one heme c in subunit I (AdhA), and finally to two heme c in subunit II (AdhB). Besides ubiquinone reduction, ADH also has a ubiquinol (QH2) oxidation reaction which mediates electron transfer from ubiquinol to the non-energy generating bypass oxidase system. The electrons transfer occurs from ubiquinol (QH2) to the additional heme c within subunit II (AdhB). The polypeptide is Alcohol dehydrogenase (quinone), dehydrogenase subunit (adhA) (Gluconacetobacter polyoxogenes (Acetobacter polyoxogenes)).